A 145-amino-acid chain; its full sequence is RNA polymerase-binding transcription factor DksA (145 aa).

C108, C111, C129, and C132 together coordinate Zn(2+). A dksA C4-type zinc finger spans residues C108–C132.

Belongs to the DksA family. In terms of assembly, interacts directly with the RNA polymerase.

It is found in the cytoplasm. Its function is as follows. Transcription factor that acts by binding directly to the RNA polymerase (RNAP). Required for negative regulation of rRNA expression and positive regulation of several amino acid biosynthesis promoters. Also required for regulation of fis expression. The sequence is that of RNA polymerase-binding transcription factor DksA from Haemophilus influenzae (strain ATCC 51907 / DSM 11121 / KW20 / Rd).